The following is a 337-amino-acid chain: MANSC domain-containing protein 4 (337 aa).

Residues 1–18 (MRAVELLLLLGLASMVHG) form the signal peptide. The Extracellular portion of the chain corresponds to 19–278 (LCSPTVFYRD…SSENEEPWDG (260 aa)). An MANSC domain is found at 33-113 (RFPGMLLDLE…LEPGASAILY (81 aa)). N114, N227, and N251 each carry an N-linked (GlcNAc...) asparagine glycan. 2 stretches are compositionally biased toward polar residues: residues 216 to 230 (SPST…NKTI) and 239 to 260 (TRVS…VNKT). Positions 216 to 277 (SPSTDFTHSP…HSSENEEPWD (62 aa)) are disordered. Residues 279 to 299 (APASAGVWLACVTLGAAVISL) traverse the membrane as a helical segment. The Cytoplasmic portion of the chain corresponds to 300-337 (CCRVVLGTSRCCGKRQGWSHMGQRSASGCRRNTLKENS). The interval 314-337 (RQGWSHMGQRSASGCRRNTLKENS) is disordered.

It localises to the membrane. This Mus musculus (Mouse) protein is MANSC domain-containing protein 4 (Mansc4).